A 354-amino-acid polypeptide reads, in one-letter code: Protein-arginine kinase (354 aa).

One can recognise a Phosphagen kinase C-terminal domain in the interval 24–254 (IVLSSRIRLA…QQIIHQEKTA (231 aa)). ATP is bound by residues 27 to 31 (SSRIR), H92, R125, 176 to 180 (RASVM), and 207 to 212 (RGIYGE). The RDXXRA motif of the pArg binding pocket involved in allosteric regulation motif lies at 337–342 (RDYRRA).

This sequence belongs to the ATP:guanido phosphotransferase family.

It catalyses the reaction L-arginyl-[protein] + ATP = N(omega)-phospho-L-arginyl-[protein] + ADP + H(+). Its activity is regulated as follows. Appears to be allosterically activated by the binding of pArg-containing polypeptides to the pArg-binding pocket localized in the C-terminal domain of McsB. In terms of biological role, catalyzes the specific phosphorylation of arginine residues in a large number of proteins. Is part of the bacterial stress response system. Protein arginine phosphorylation has a physiologically important role and is involved in the regulation of many critical cellular processes, such as protein homeostasis, motility, competence, and stringent and stress responses, by regulating gene expression and protein activity. This Bacillus mycoides (strain KBAB4) (Bacillus weihenstephanensis) protein is Protein-arginine kinase.